The following is a 118-amino-acid chain: Ribonuclease P protein component (118 aa).

The protein belongs to the RnpA family. As to quaternary structure, consists of a catalytic RNA component (M1 or rnpB) and a protein subunit.

The enzyme catalyses Endonucleolytic cleavage of RNA, removing 5'-extranucleotides from tRNA precursor.. Functionally, RNaseP catalyzes the removal of the 5'-leader sequence from pre-tRNA to produce the mature 5'-terminus. It can also cleave other RNA substrates such as 4.5S RNA. The protein component plays an auxiliary but essential role in vivo by binding to the 5'-leader sequence and broadening the substrate specificity of the ribozyme. This is Ribonuclease P protein component from Shewanella frigidimarina (strain NCIMB 400).